Consider the following 923-residue polypeptide: SPX and EXS domain-containing protein 1 (923 aa).

One can recognise an SPX domain in the interval 1-326 (MKFGKKLRFE…PMNSSIKLDQ (326 aa)). Composition is skewed to low complexity over residues 94-147 (QEQS…QQQQ) and 186-195 (TTTTTTTTTT). 2 disordered regions span residues 94-150 (QEQS…QDLK) and 185-208 (PTTT…FKNK). 9 consecutive transmembrane segments (helical) span residues 382–402 (LKLG…IILF), 416–436 (FVST…VWLW), 471–491 (ASFL…TVTG), 499–519 (PAQV…FFPF), 529–551 (LLFI…RALF), 591–611 (SIAL…QCIL), 620–640 (IHLG…FSAL), 655–675 (ILWC…DVVV), and 700–720 (WSYY…TLTI). The EXS domain maps to 585–785 (RCNQVNSIAL…KNEVPKVESP (201 aa)). The segment at 793–871 (SSYPYRQDNF…NNSPSGSNSS (79 aa)) is disordered.

This sequence belongs to the SYG1 (TC 2.A.94) family.

Its subcellular location is the membrane. In Dictyostelium discoideum (Social amoeba), this protein is SPX and EXS domain-containing protein 1.